The following is a 243-amino-acid chain: MKAGIIGAMEPEVAILKEKLTDAKSTEHAGYTFHQGQLDGSDVVIVQSGIGKVAAALATAILIDRFQVDYVVNTGSAGGFDASLKVGDIVVSSEVRYHDVDLTAFGYEIGQLPANPAAFMPHDDLVAAAKKGIEQLSQTAGENIKAVTGLITTGDTFMTKEEDVAKARANFPTMAAVEMEGAAIAQACLQLKTPFVVIRSLSDIAGKESPHTFEEYLETAAVNSSQLVLNMLGQLKGKVLSAA.

The active-site Proton acceptor is the E12. Residues G78, M158, and 179-180 (ME) contribute to the substrate site. Catalysis depends on D203, which acts as the Proton donor.

This sequence belongs to the PNP/UDP phosphorylase family. MtnN subfamily.

The enzyme catalyses S-adenosyl-L-homocysteine + H2O = S-(5-deoxy-D-ribos-5-yl)-L-homocysteine + adenine. It carries out the reaction S-methyl-5'-thioadenosine + H2O = 5-(methylsulfanyl)-D-ribose + adenine. It catalyses the reaction 5'-deoxyadenosine + H2O = 5-deoxy-D-ribose + adenine. Its pathway is amino-acid biosynthesis; L-methionine biosynthesis via salvage pathway; S-methyl-5-thio-alpha-D-ribose 1-phosphate from S-methyl-5'-thioadenosine (hydrolase route): step 1/2. Its function is as follows. Catalyzes the irreversible cleavage of the glycosidic bond in both 5'-methylthioadenosine (MTA) and S-adenosylhomocysteine (SAH/AdoHcy) to adenine and the corresponding thioribose, 5'-methylthioribose and S-ribosylhomocysteine, respectively. Also cleaves 5'-deoxyadenosine, a toxic by-product of radical S-adenosylmethionine (SAM) enzymes, into 5-deoxyribose and adenine. The protein is 5'-methylthioadenosine/S-adenosylhomocysteine nucleosidase of Colwellia psychrerythraea (strain 34H / ATCC BAA-681) (Vibrio psychroerythus).